The following is a 405-amino-acid chain: Imidazolonepropionase (405 aa).

Positions 70 and 72 each coordinate Fe(3+). The Zn(2+) site is built by His-70 and His-72. 4-imidazolone-5-propanoate contacts are provided by Arg-79, Tyr-142, and His-175. Tyr-142 lines the N-formimidoyl-L-glutamate pocket. His-240 serves as a coordination point for Fe(3+). His-240 serves as a coordination point for Zn(2+). Gln-243 contributes to the 4-imidazolone-5-propanoate binding site. Asp-315 contributes to the Fe(3+) binding site. Asp-315 provides a ligand contact to Zn(2+). Residues Asn-317 and Gly-319 each contribute to the N-formimidoyl-L-glutamate site. Ser-320 lines the 4-imidazolone-5-propanoate pocket.

Belongs to the metallo-dependent hydrolases superfamily. HutI family. Requires Zn(2+) as cofactor. It depends on Fe(3+) as a cofactor.

The protein resides in the cytoplasm. The catalysed reaction is 4-imidazolone-5-propanoate + H2O = N-formimidoyl-L-glutamate. It functions in the pathway amino-acid degradation; L-histidine degradation into L-glutamate; N-formimidoyl-L-glutamate from L-histidine: step 3/3. In terms of biological role, catalyzes the hydrolytic cleavage of the carbon-nitrogen bond in imidazolone-5-propanoate to yield N-formimidoyl-L-glutamate. It is the third step in the universal histidine degradation pathway. This chain is Imidazolonepropionase, found in Ruegeria sp. (strain TM1040) (Silicibacter sp.).